Reading from the N-terminus, the 2205-residue chain is Genome polyprotein (2205 aa).

The N-myristoyl glycine; by host moiety is linked to residue G2. Over 2 to 1518 (GAQVSSQKVG…NINRAMTILQ (1517 aa)) the chain is Cytoplasmic. Residues 579–599 (GLGDLIEGVVEGVTRNALTPL) form an amphipathic alpha-helix region. Polar residues predominate over residues 598 to 613 (PLTPVNNLPDTRSSGP). The disordered stretch occupies residues 598-619 (PLTPVNNLPDTRSSGPAHSKET). Residues H899 and D917 each act as for protease 2A activity in the active site. Zn(2+) contacts are provided by C934 and C936. C988 serves as the catalytic For protease 2A activity. Zn(2+) is bound by residues C994 and H996. A membrane-binding region spans residues 1126–1198 (GDSWLKKFTE…HQSCPSQEHQ (73 aa)). Positions 1126–1264 (GDSWLKKFTE…SPGTGKSVAT (139 aa)) are oligomerization. An RNA-binding region spans residues 1147–1151 (SNKIS). The SF3 helicase domain maps to 1230–1386 (EHTINNYVQF…SEYSRDGKLN (157 aa)). Residue 1254 to 1261 (GSPGTGKS) participates in ATP binding. Positions 1394, 1397, 1406, and 1411 each coordinate Zn(2+). The segment at 1394–1411 (CKNCHQPANFKRCCPLVC) adopts a C4-type zinc-finger fold. The RNA-binding stretch occupies residues 1438-1445 (ERNRRSSI). The oligomerization stretch occupies residues 1449-1454 (MEALFQ). Residues 1519-1534 (AVTTFAAVAGVVYVMY) lie within the membrane without spanning it. At 1535–2205 (KLFAGHQGAY…TLYRRWLDSF (671 aa)) the chain is on the cytoplasmic side. Y1544 is subject to O-(5'-phospho-RNA)-tyrosine. The Peptidase C3 domain maps to 1564 to 1742 (GPGFDYAVAM…FAAALKRSYF (179 aa)). Catalysis depends on for protease 3C activity residues H1603, E1634, and C1710. One can recognise a RdRp catalytic domain in the interval 1971 to 2086 (MEEKLFDYTG…SYPHEVDASL (116 aa)). Mg(2+) is bound by residues D1977 and D2072.

The protein belongs to the picornaviruses polyprotein family. Interacts with capsid protein VP1 and capsid protein VP3 to form heterotrimeric protomers. In terms of assembly, interacts with capsid protein VP0, and capsid protein VP3 to form heterotrimeric protomers. Interacts with human PVR. Five protomers subsequently associate to form pentamers which serve as building blocks for the capsid. Interacts with capsid protein VP2, capsid protein VP3 and capsid protein VP4 following cleavage of capsid protein VP0. As to quaternary structure, interacts with capsid protein VP1 and capsid protein VP3 in the mature capsid. Interacts with capsid protein VP0 and capsid protein VP1 to form heterotrimeric protomers. Five protomers subsequently associate to form pentamers which serve as building blocks for the capsid. Interacts with capsid protein VP4 in the mature capsid. Interacts with protein 2C; this interaction may be important for virion morphogenesis. In terms of assembly, interacts with capsid protein VP1 and capsid protein VP3. As to quaternary structure, homodimer. Homohexamer; forms a hexameric ring structure with 6-fold symmetry characteristic of AAA+ ATPases. Interacts (via N-terminus) with host RTN3 (via reticulon domain); this interaction is important for viral replication. Interacts with capsid protein VP3; this interaction may be important for virion morphogenesis. In terms of assembly, interacts with protein 3CD. As to quaternary structure, homodimer. Interacts with host GBF1. Interacts (via GOLD domain) with host ACBD3 (via GOLD domain); this interaction allows the formation of a viral protein 3A/ACBD3 heterotetramer with a 2:2 stoichiometry, which will stimulate the recruitment of host PI4KB in order to synthesize PI4P at the viral RNA replication sites. Interacts with RNA-directed RNA polymerase. In terms of assembly, interacts with protein 3AB and with RNA-directed RNA polymerase. As to quaternary structure, interacts with Viral protein genome-linked and with protein 3CD. Mg(2+) is required as a cofactor. Post-translationally, specific enzymatic cleavages in vivo by the viral proteases yield processing intermediates and the mature proteins. In terms of processing, myristoylation is required for the formation of pentamers during virus assembly. Further assembly of 12 pentamers and a molecule of genomic RNA generates the provirion. During virion maturation, immature virions are rendered infectious following cleavage of VP0 into VP4 and VP2. This maturation seems to be an autocatalytic event triggered by the presence of RNA in the capsid and it is followed by a conformational change infectious virion. Post-translationally, myristoylation is required during RNA encapsidation and formation of the mature virus particle. In terms of processing, VPg is uridylylated by the polymerase into VPg-pUpU. This acts as a nucleotide-peptide primer for the genomic RNA replication.

It localises to the virion. Its subcellular location is the host cytoplasm. The protein localises to the host cytoplasmic vesicle membrane. The protein resides in the host nucleus. The catalysed reaction is a ribonucleoside 5'-triphosphate + H2O = a ribonucleoside 5'-diphosphate + phosphate + H(+). It catalyses the reaction Selective cleavage of Tyr-|-Gly bond in the picornavirus polyprotein.. The enzyme catalyses RNA(n) + a ribonucleoside 5'-triphosphate = RNA(n+1) + diphosphate. It carries out the reaction Selective cleavage of Gln-|-Gly bond in the poliovirus polyprotein. In other picornavirus reactions Glu may be substituted for Gln, and Ser or Thr for Gly.. Its activity is regulated as follows. Replication or transcription is subject to high level of random mutations by the nucleotide analog ribavirin. Its function is as follows. Forms an icosahedral capsid of pseudo T=3 symmetry with capsid proteins VP2 and VP3. The capsid is 300 Angstroms in diameter, composed of 60 copies of each capsid protein and enclosing the viral positive strand RNA genome. Capsid protein VP1 mainly forms the vertices of the capsid. Capsid protein VP1 interacts with host cell receptor PVR to provide virion attachment to target host cells. This attachment induces virion internalization predominantly through clathrin- and caveolin-independent endocytosis in Hela cells and through caveolin-mediated endocytosis in brain microvascular endothelial cells. Tyrosine kinases are probably involved in the entry process. Virus binding to PVR induces increased junctional permeability and rearrangement of junctional proteins. Modulation of endothelial tight junctions, as well as cytolytic infection of endothelial cells themselves, may result in loss of endothelial integrity which may help the virus to reach the CNS. After binding to its receptor, the capsid undergoes conformational changes. Capsid protein VP1 N-terminus (that contains an amphipathic alpha-helix) and capsid protein VP4 are externalized. Together, they shape a pore in the host membrane through which viral genome is translocated to host cell cytoplasm. Functionally, forms an icosahedral capsid of pseudo T=3 symmetry with capsid proteins VP2 and VP3. The capsid is 300 Angstroms in diameter, composed of 60 copies of each capsid protein and enclosing the viral positive strand RNA genome. Lies on the inner surface of the capsid shell. After binding to the host receptor, the capsid undergoes conformational changes. Capsid protein VP4 is released, Capsid protein VP1 N-terminus is externalized, and together, they shape a pore in the host membrane through which the viral genome is translocated into the host cell cytoplasm. In terms of biological role, component of immature procapsids, which is cleaved into capsid proteins VP4 and VP2 after maturation. Allows the capsid to remain inactive before the maturation step. Its function is as follows. Cysteine protease that cleaves viral polyprotein and specific host proteins. It is responsible for the autocatalytic cleavage between the P1 and P2 regions, which is the first cleavage occurring in the polyprotein. Also cleaves the host translation initiation factor EIF4G1, in order to shut down the capped cellular mRNA translation. Inhibits the host nucleus-cytoplasm protein and RNA trafficking by cleaving host members of the nuclear pores including NUP98, NUP62 and NUP153. Counteracts stress granule formation probably by antagonizing its assembly or promoting its dissassembly. Cleaves and inhibits host IFIH1/MDA5, thereby inhibiting the type-I IFN production and the establishment of the antiviral state. Cleaves and inhibits host MAVS, thereby inhibiting the type-I IFN production and the establishment of the antiviral state. Functionally, plays an essential role in the virus replication cycle by acting as a viroporin. Creates a pore in the host endoplasmic reticulum and as a consequence releases Ca2+ in the cytoplasm of infected cell. In turn, high levels of cytoplasmic calcium may trigger membrane trafficking and transport of viral ER-associated proteins to viroplasms, sites of viral genome replication. Induces and associates with structural rearrangements of intracellular membranes. Displays RNA-binding, nucleotide binding and NTPase activities. May play a role in virion morphogenesis and viral RNA encapsidation by interacting with the capsid protein VP3. In terms of biological role, localizes the viral replication complex to the surface of membranous vesicles. Together with protein 3CD binds the Cis-Active RNA Element (CRE) which is involved in RNA synthesis initiation. Acts as a cofactor to stimulate the activity of 3D polymerase, maybe through a nucleid acid chaperone activity. Its function is as follows. Localizes the viral replication complex to the surface of membranous vesicles. It inhibits host cell endoplasmic reticulum-to-Golgi apparatus transport and causes the disassembly of the Golgi complex, possibly through GBF1 interaction. This would result in depletion of MHC, trail receptors and IFN receptors at the host cell surface. Plays an essential role in viral RNA replication by recruiting ACBD3 and PI4KB at the viral replication sites, thereby allowing the formation of the rearranged membranous structures where viral replication takes place. Functionally, acts as a primer for viral RNA replication and remains covalently bound to viral genomic RNA. VPg is uridylylated prior to priming replication into VPg-pUpU. The oriI viral genomic sequence may act as a template for this. The VPg-pUpU is then used as primer on the genomic RNA poly(A) by the RNA-dependent RNA polymerase to replicate the viral genome. During genome replication, the VPg-RNA linkage is removed by the host TDP2, thereby accelerating replication. During the late stage of the replication cycle, host TDP2 is excluded from sites of viral RNA synthesis and encapsidation, allowing for the generation of progeny virions. Involved in the viral replication complex and viral polypeptide maturation. It exhibits protease activity with a specificity and catalytic efficiency that is different from protease 3C. Protein 3CD lacks polymerase activity. Protein 3CD binds to the 5'UTR of the viral genome. In terms of biological role, major viral protease that mediates proteolytic processing of the polyprotein. Cleaves host EIF5B, contributing to host translation shutoff. Also cleaves host PABPC1, contributing to host translation shutoff. Cleaves host RIGI and thus contributes to the inhibition of type I interferon production. Cleaves host NLRP1, triggers host N-glycine-mediated degradation of the autoinhibitory NLRP1 N-terminal fragment. Inhibits the integrated stress response (ISR) in the infected cell by cleaving host G3BP1. Stress granule formation is thus inhibited, which allows protein synthesis and viral replication. Its function is as follows. Replicates the viral genomic RNA on the surface of intracellular membranes. May form linear arrays of subunits that propagate along a strong head-to-tail interaction called interface-I. Covalently attaches UMP to a tyrosine of VPg, which is used to prime RNA synthesis. The positive stranded RNA genome is first replicated at virus induced membranous vesicles, creating a dsRNA genomic replication form. This dsRNA is then used as template to synthesize positive stranded RNA genomes. ss(+)RNA genomes are either translated, replicated or encapsidated. The protein is Genome polyprotein of Homo sapiens (Human).